The chain runs to 239 residues: 1-(5-phosphoribosyl)-5-[(5-phosphoribosylamino)methylideneamino] imidazole-4-carboxamide isomerase (239 aa).

Aspartate 9 functions as the Proton acceptor in the catalytic mechanism. The active-site Proton donor is aspartate 131.

Belongs to the HisA/HisF family.

The protein localises to the cytoplasm. The enzyme catalyses 1-(5-phospho-beta-D-ribosyl)-5-[(5-phospho-beta-D-ribosylamino)methylideneamino]imidazole-4-carboxamide = 5-[(5-phospho-1-deoxy-D-ribulos-1-ylimino)methylamino]-1-(5-phospho-beta-D-ribosyl)imidazole-4-carboxamide. It participates in amino-acid biosynthesis; L-histidine biosynthesis; L-histidine from 5-phospho-alpha-D-ribose 1-diphosphate: step 4/9. This chain is 1-(5-phosphoribosyl)-5-[(5-phosphoribosylamino)methylideneamino] imidazole-4-carboxamide isomerase, found in Bacteroides fragilis (strain ATCC 25285 / DSM 2151 / CCUG 4856 / JCM 11019 / LMG 10263 / NCTC 9343 / Onslow / VPI 2553 / EN-2).